The chain runs to 208 residues: uncharacterized protein (208 aa).

This is an uncharacterized protein from Schizosaccharomyces pombe (strain 972 / ATCC 24843) (Fission yeast).